The sequence spans 238 residues: Accessory gene regulator A (238 aa).

Residues 2 to 125 (KIFICEDDPK…LRTRIIDCLE (124 aa)) form the Response regulatory domain. Residue Asp-59 is modified to 4-aspartylphosphate. Residues 143–238 (IELKRGSNSV…YASVRNVKKI (96 aa)) form the HTH LytTR-type domain.

The protein resides in the cytoplasm. Its function is as follows. Required for high-level post-exponential phase expression of a series of secreted proteins. This Staphylococcus aureus (strain COL) protein is Accessory gene regulator A (agrA).